The chain runs to 298 residues: 4-hydroxy-tetrahydrodipicolinate synthase (298 aa).

Residue threonine 48 coordinates pyruvate. The active-site Proton donor/acceptor is tyrosine 137. Lysine 166 (schiff-base intermediate with substrate) is an active-site residue. Pyruvate is bound at residue isoleucine 207.

This sequence belongs to the DapA family. In terms of assembly, homotetramer; dimer of dimers.

It is found in the cytoplasm. It carries out the reaction L-aspartate 4-semialdehyde + pyruvate = (2S,4S)-4-hydroxy-2,3,4,5-tetrahydrodipicolinate + H2O + H(+). The protein operates within amino-acid biosynthesis; L-lysine biosynthesis via DAP pathway; (S)-tetrahydrodipicolinate from L-aspartate: step 3/4. Functionally, catalyzes the condensation of (S)-aspartate-beta-semialdehyde [(S)-ASA] and pyruvate to 4-hydroxy-tetrahydrodipicolinate (HTPA). This is 4-hydroxy-tetrahydrodipicolinate synthase from Campylobacter jejuni subsp. jejuni serotype O:6 (strain 81116 / NCTC 11828).